The primary structure comprises 482 residues: Pyruvate kinase (482 aa).

Residue R37 coordinates substrate. K(+) contacts are provided by N39, S41, and D71. 39-42 (NFSH) provides a ligand contact to ATP. The ATP site is built by R78 and K160. E222 contacts Mg(2+). G245, D246, and T278 together coordinate substrate. D246 contributes to the Mg(2+) binding site.

Belongs to the pyruvate kinase family. Homotetramer. Mg(2+) serves as cofactor. Requires K(+) as cofactor.

It catalyses the reaction pyruvate + ATP = phosphoenolpyruvate + ADP + H(+). It functions in the pathway carbohydrate degradation; glycolysis; pyruvate from D-glyceraldehyde 3-phosphate: step 5/5. This chain is Pyruvate kinase (ttuE), found in Agrobacterium vitis (Rhizobium vitis).